The primary structure comprises 429 residues: MDPSVTLWQFLLQLLREQGNGHIISWTSRDGGEFKLVDAEEVARLWGLRKNKTNMNYDKLSRALRYYYDKNIIRKVSGQKFVYKFVSYPEVAGCSTEDCPPQPEVSVTSAIAMAPATVHAGPGDTATGKPGTPKGAGMTGQGGLARSSRNEYMRSGLYSTFTIQSLQPQPQPPIPPRPASVLPNTTPAGVPAPASGSRSTSPNPLEACLEAEEAGLPLQVILTPPEAPNQKSEELSLDPSFGHPQPPEVKVEGPKEELEAARAGGFSSEAVKAEPEVSASEGLLARLPAILTENTAQVCGLSTSTTEITQPQKGRKPRDLELPLSPSLLGGQGPERTPGSGTSSGLQAPGPALTPSLLPTHTLTPVLLTPSSLPPSIHFWSTLSPIAPRSPAKLSFQFPSSGSAQVHIPSISVDGLSTPVVLSPGPQKP.

Positions 5–86 form a DNA-binding region, ETS; that stretch reads VTLWQFLLQL…SGQKFVYKFV (82 aa). 3 disordered regions span residues 119–146, 165–204, and 227–253; these read HAGP…GLAR, SLQP…SPNP, and APNQ…KVEG. Over residues 169-178 the composition is skewed to pro residues; that stretch reads QPQPPIPPRP. Glycyl lysine isopeptide (Lys-Gly) (interchain with G-Cter in SUMO) cross-links involve residues Lys231, Lys250, and Lys255. Residues 302-312 are compositionally biased toward polar residues; the sequence is STSTTEITQPQ. The disordered stretch occupies residues 302 to 354; the sequence is STSTTEITQPQKGRKPRDLELPLSPSLLGGQGPERTPGSGTSSGLQAPGPALT. At Ser325 the chain carries Phosphoserine; by MAPK1. Phosphothreonine; by MAPK1 is present on residues Thr337, Thr354, Thr364, and Thr369. Residues 350–400 form a sufficient for interaction with MAD2L2 region; that stretch reads GPALTPSLLPTHTLTPVLLTPSSLPPSIHFWSTLSPIAPRSPAKLSFQFPS. O-linked (GlcNAc) threonine glycosylation occurs at Thr382. Ser384 carries the post-translational modification Phosphoserine; by MAPK1 and MAPK8. A Phosphoserine; by MAPK1 modification is found at Ser390. Thr418 bears the Phosphothreonine; by MAPK1 mark. The residue at position 423 (Ser423) is a Phosphoserine; by MAPK1.

It belongs to the ETS family. Interacts in its sumoylated form with PIAS2/PIASX which enhances its transcriptional activator activity. Interacts with MAD2L2; the interaction is direct and promotes phosphorylation by the kinases MAPK8 and/or MAPK9. Interacts with POU1F1. In terms of processing, sumoylation represses transcriptional activator activity as it results in recruitment of HDAC2 to target gene promoters which leads to decreased histone acetylation and reduced transactivator activity. It also regulates nuclear retention. On mitogenic stimulation, phosphorylated on C-terminal serine and threonine residues by MAPK1 but also MAPK8 and/or MAPK9. Phosphorylation leads to loss of sumoylation and restores transcriptional activator activity. Phosphorylated and activated by CaMK4, MAPK11, MAPK12 and MAPK14. Upon bFGF stimulus, phosphorylated by PAK1. Phosphorylated by PRP4K at Thr-418; phosphorylation activation ELK1 transcriptional activity. As to expression, predominantly expressed in the brain, and to a lesser extent in the heart, liver and muscle.

The protein localises to the nucleus. Transcription factor that binds to purine-rich DNA sequences. Forms a ternary complex with SRF and the ETS and SRF motifs of the serum response element (SRE) on the promoter region of immediate early genes such as FOS and IER2. Induces target gene transcription upon JNK and MAPK-signaling pathways stimulation. The polypeptide is ETS domain-containing protein Elk-1 (Mus musculus (Mouse)).